Here is an 864-residue protein sequence, read N- to C-terminus: MSKSAVSPMMQQYLGIKAQHTDKLVFYRMGDFYEMFFDDAVEAAKLLDITLTTRGQVDGEPVKMAGVPFHAAEQYLARLVKLGKSVAICEQVGEVGAGKGPVERKVVRIVTPGTLTDSALLEDKETNRIVAVSPDKKYIGLAWASLQSGEFKTKLTTVDKLDDELARLQAAEILLPDSKNAPQLQTASGVTRLNAWQFAADAGEKLLTEYFGCQDLRGFGLDGKEHAVAIGAAGALLNYIRLTQNLMPQHLDGLSLETDSQYIGMDAATRRNLEITQTLSGKKSPTLMSTLDLCATHMGSRLLALWLHHPLRNRAHIRARQEAVAALESQYKPLQCRLKNIADIERIAARIAVGNARPRDLASLRDSLFELAQIDLSANGSSLLETLKAVFPENLSTAEQLRQAILPEPSVWLKDGNVINHGFHPELDELRRIQNHGDEFLLDLEAKERERTGLSTLKVEFNRVHGFYIELSKTQAEQAPADYQRRQTLKNAERFITPELKAFEDKVLTAQEQALALEKQLFDGVLKNLQTALPQLQKAAKAAAALDVLSTFSALAKERNFVRPEFADYPAIHIENGRHPVVEQQVRHFTANHTNLDHKHRLMLLTGPNMGGKSTYMRQVALIVLLAHTGCFVPADAATIGPIDQIFTRIGASDDLASNRSTFMVEMSETAYILHHATEQSLVLMDEVGRGTSTFDGLALAHAVAEHLLQKNKSFSLFATHYFELTYLPEAHAAAVNMHLSALEQGQDIVFLHQIQPGPAGKSYGIAVAKLAGLPVRALKSAQKHLNGLENQAAANRPQLDIFSTMPSEKGDEPNVGNFVDKAEEKHFEGILAAALEKLDPDSLTPREALSELYRLKDLCKSVS.

Gly607–Ser614 provides a ligand contact to ATP.

Belongs to the DNA mismatch repair MutS family.

This protein is involved in the repair of mismatches in DNA. It is possible that it carries out the mismatch recognition step. This protein has a weak ATPase activity. This is DNA mismatch repair protein MutS from Neisseria meningitidis serogroup A / serotype 4A (strain DSM 15465 / Z2491).